We begin with the raw amino-acid sequence, 192 residues long: Sporulation initiation phosphotransferase B (192 aa).

Histidine 30 carries the phosphohistidine modification.

In terms of assembly, homodimer. Dimerization is essential for activity as both monomers contribute to the formation of the active site. Phosphorylated by spo0F.

It is found in the cytoplasm. Its function is as follows. Key element in the phosphorelay regulating sporulation initiation. Acts on spo0A. Mediates reversible phosphoryl transfer from spo0F to spo0A. This Bacillus subtilis (strain 168) protein is Sporulation initiation phosphotransferase B (spo0B).